A 372-amino-acid chain; its full sequence is Aminomethyltransferase (372 aa).

Belongs to the GcvT family. As to quaternary structure, the glycine cleavage system is composed of four proteins: P, T, L and H.

The catalysed reaction is N(6)-[(R)-S(8)-aminomethyldihydrolipoyl]-L-lysyl-[protein] + (6S)-5,6,7,8-tetrahydrofolate = N(6)-[(R)-dihydrolipoyl]-L-lysyl-[protein] + (6R)-5,10-methylene-5,6,7,8-tetrahydrofolate + NH4(+). Its function is as follows. The glycine cleavage system catalyzes the degradation of glycine. This chain is Aminomethyltransferase, found in Rubrobacter xylanophilus (strain DSM 9941 / JCM 11954 / NBRC 16129 / PRD-1).